A 302-amino-acid polypeptide reads, in one-letter code: MNKIRCALIGPGNIGTDLLYKLRRSDILEPVWMVGVEPSSEGLARARELGLKTTSDGIDGLLPHLEADDIRIAFDATSAYVHAEHSARLTARGVRVIDLTPAAIGPFCVPPVNLDAHIGSNEMNVNMVTCGGQATIPMVYAVSRVQPVAYGEIVATVSSRSVGPGTRRNIDEFTRTTAGAIEAVGGARQGKAIIVINPAEPPLIMRDTIHCLTDDAPDVAAITASVHDMIAEVRKYVPGYTLKNGPVFDGKRVSIFLEVEGLGDYLPKYAGNLDIMTASAARTAECIAAAMRAGSAQESANA.

Residue Cys-130 is the Acyl-thioester intermediate of the active site. NAD(+)-binding positions include 161-169 (SVGPGTRRN) and Asn-272.

This sequence belongs to the acetaldehyde dehydrogenase family.

It catalyses the reaction acetaldehyde + NAD(+) + CoA = acetyl-CoA + NADH + H(+). This is Acetaldehyde dehydrogenase 2 from Cupriavidus necator (strain ATCC 17699 / DSM 428 / KCTC 22496 / NCIMB 10442 / H16 / Stanier 337) (Ralstonia eutropha).